A 447-amino-acid polypeptide reads, in one-letter code: Argininosuccinate synthase (447 aa).

Residues 17-25 (AFSGGLDTS) and Ala-43 each bind ATP. Tyr-99 provides a ligand contact to L-citrulline. ATP is bound by residues Gly-129 and Thr-131. Positions 131, 135, and 136 each coordinate L-aspartate. Position 135 (Asn-135) interacts with L-citrulline. Asp-136 contacts ATP. Arg-139 and Ser-192 together coordinate L-citrulline. Asp-194 is a binding site for ATP. 3 residues coordinate L-citrulline: Thr-201, Glu-203, and Glu-280.

Belongs to the argininosuccinate synthase family. Type 2 subfamily. As to quaternary structure, homotetramer.

Its subcellular location is the cytoplasm. The enzyme catalyses L-citrulline + L-aspartate + ATP = 2-(N(omega)-L-arginino)succinate + AMP + diphosphate + H(+). It functions in the pathway amino-acid biosynthesis; L-arginine biosynthesis; L-arginine from L-ornithine and carbamoyl phosphate: step 2/3. The chain is Argininosuccinate synthase from Salmonella heidelberg (strain SL476).